The sequence spans 126 residues: Holo-[acyl-carrier-protein] synthase (126 aa).

Residues Asp6 and Glu55 each coordinate Mg(2+).

This sequence belongs to the P-Pant transferase superfamily. AcpS family. Mg(2+) serves as cofactor.

The protein resides in the cytoplasm. The enzyme catalyses apo-[ACP] + CoA = holo-[ACP] + adenosine 3',5'-bisphosphate + H(+). In terms of biological role, transfers the 4'-phosphopantetheine moiety from coenzyme A to a Ser of acyl-carrier-protein. The chain is Holo-[acyl-carrier-protein] synthase from Chlorobium limicola (strain DSM 245 / NBRC 103803 / 6330).